A 739-amino-acid polypeptide reads, in one-letter code: Phosphoribosylformylglycinamidine synthase subunit PurL (739 aa).

H54 is an active-site residue. ATP-binding residues include Y57 and K96. A Mg(2+)-binding site is contributed by E98. Residues 99-102 (SHNH) and R121 contribute to the substrate site. The active-site Proton acceptor is the H100. D122 serves as a coordination point for Mg(2+). Substrate is bound at residue Q245. D273 lines the Mg(2+) pocket. 317-319 (ESQ) contributes to the substrate binding site. ATP is bound by residues D500 and G537. N538 contacts Mg(2+). S540 is a binding site for substrate.

The protein belongs to the FGAMS family. As to quaternary structure, monomer. Part of the FGAM synthase complex composed of 1 PurL, 1 PurQ and 2 PurS subunits.

The protein resides in the cytoplasm. The enzyme catalyses N(2)-formyl-N(1)-(5-phospho-beta-D-ribosyl)glycinamide + L-glutamine + ATP + H2O = 2-formamido-N(1)-(5-O-phospho-beta-D-ribosyl)acetamidine + L-glutamate + ADP + phosphate + H(+). It functions in the pathway purine metabolism; IMP biosynthesis via de novo pathway; 5-amino-1-(5-phospho-D-ribosyl)imidazole from N(2)-formyl-N(1)-(5-phospho-D-ribosyl)glycinamide: step 1/2. In terms of biological role, part of the phosphoribosylformylglycinamidine synthase complex involved in the purines biosynthetic pathway. Catalyzes the ATP-dependent conversion of formylglycinamide ribonucleotide (FGAR) and glutamine to yield formylglycinamidine ribonucleotide (FGAM) and glutamate. The FGAM synthase complex is composed of three subunits. PurQ produces an ammonia molecule by converting glutamine to glutamate. PurL transfers the ammonia molecule to FGAR to form FGAM in an ATP-dependent manner. PurS interacts with PurQ and PurL and is thought to assist in the transfer of the ammonia molecule from PurQ to PurL. This Bacillus cereus (strain B4264) protein is Phosphoribosylformylglycinamidine synthase subunit PurL.